The chain runs to 229 residues: Uracil-DNA glycosylase (229 aa).

The active-site Proton acceptor is Asp67.

The protein belongs to the uracil-DNA glycosylase (UDG) superfamily. UNG family.

It localises to the cytoplasm. The enzyme catalyses Hydrolyzes single-stranded DNA or mismatched double-stranded DNA and polynucleotides, releasing free uracil.. In terms of biological role, excises uracil residues from the DNA which can arise as a result of misincorporation of dUMP residues by DNA polymerase or due to deamination of cytosine. In Coxiella burnetii (strain CbuG_Q212) (Coxiella burnetii (strain Q212)), this protein is Uracil-DNA glycosylase.